Reading from the N-terminus, the 480-residue chain is 2-phosphoxylose phosphatase 1 (480 aa).

Over 1-6 (MLYRNR) the chain is Cytoplasmic. Residues 7-27 (FLVLLALAGLLAFLSLSLQFF) form a helical; Signal-anchor for type II membrane protein membrane-spanning segment. Residues 28-480 (HLIPVSTTKN…YYDACHGEGA (453 aa)) lie on the Lumenal side of the membrane. His97 (nucleophile) is an active-site residue. N-linked (GlcNAc...) asparagine glycosylation is found at Asn194, Asn305, and Asn354. Residue Asp379 is the Proton donor of the active site.

The protein belongs to the histidine acid phosphatase family. As to quaternary structure, interacts with B3GAT3; the interaction increases the 2-phosphoxylose phosphatase activity of PXYLP1 during completion of linkage region formation in a B3GAT3-mediated manner.

Its subcellular location is the golgi apparatus membrane. It carries out the reaction 3-O-[beta-D-GlcA-(1-&gt;3)-beta-D-Gal-(1-&gt;3)-beta-D-Gal-(1-&gt;4)-beta-D-2-O-P-Xyl]-L-seryl-[protein] + H2O = 3-O-(beta-D-GlcA-(1-&gt;3)-beta-D-Gal-(1-&gt;3)-beta-D-Gal-(1-&gt;4)-beta-D-Xyl)-L-seryl-[protein] + phosphate. Responsible for the 2-O-dephosphorylation of xylose in the glycosaminoglycan-protein linkage region of proteoglycans thereby regulating the amount of mature glycosaminoglycan (GAG) chains. Sulfated glycosaminoglycans (GAGs), including heparan sulfate and chondroitin sulfate, are synthesized on the so-called common GAG-protein linkage region (GlcUAbeta1-3Galbeta1-3Galbeta1-4Xylbeta1-O-Ser) of core proteins, which is formed by the stepwise addition of monosaccharide residues by the respective specific glycosyltransferases. Xylose 2-O-dephosphorylation during completion of linkage region formation is a prerequisite for the initiation and efficient elongation of the repeating disaccharide region of GAG chains. The sequence is that of 2-phosphoxylose phosphatase 1 from Rattus norvegicus (Rat).